The chain runs to 523 residues: Cytidine and dCMP deaminase domain-containing protein 1 (523 aa).

A compositionally biased stretch (polar residues) spans 1–11; it reads MKETDQMQSLE. 2 disordered regions span residues 1 to 27 and 55 to 81; these read MKET…GSMT and QGQK…RVST. One can recognise a CMP/dCMP-type deaminase 1 domain in the interval 71 to 169; sequence GDNEELTRVS…SLLTEASSSE (99 aa). Positions 110, 135, and 138 each coordinate Zn(2+). Positions 272–284 match the Nuclear export signal motif; that stretch reads NLRQNMKDLILLL. The CMP/dCMP-type deaminase 2 domain occupies 318 to 483; sequence EVARHCMVQA…LNPSEAYSLD (166 aa). His399 provides a ligand contact to Zn(2+). Catalysis depends on Glu401, which acts as the Proton donor. Cys427 and Cys430 together coordinate Zn(2+). The interval 478 to 523 is disordered; sequence EAYSLDPNEPERRENGVLRRRSAKDEQRSSKRPRLETRSAGRATLQ. A compositionally biased stretch (basic and acidic residues) spans 486-516; it reads EPERRENGVLRRRSAKDEQRSSKRPRLETRS. A Bipartite nuclear localization signal motif is present at residues 489-511; sequence RRENGVLRRRSAKDEQRSSKRPR.

The protein belongs to the cytidine and deoxycytidylate deaminase family. It depends on Zn(2+) as a cofactor.

It is found in the cytoplasm. The protein localises to the nucleus. It carries out the reaction 2'-deoxycytidine + H2O + H(+) = 2'-deoxyuridine + NH4(+). It catalyses the reaction cytidine + H2O + H(+) = uridine + NH4(+). Functionally, catalyzes the deamination of cytidine and deoxycytidine into uridine and deoxyuridine, respectively. May play an important role in testicular development and spermatogenesis. The sequence is that of Cytidine and dCMP deaminase domain-containing protein 1 (Cdadc1) from Mus musculus (Mouse).